The primary structure comprises 77 residues: UPF0401 protein ECP_3853 (77 aa).

It belongs to the UPF0401 family.

In Escherichia coli O6:K15:H31 (strain 536 / UPEC), this protein is UPF0401 protein ECP_3853.